The primary structure comprises 200 residues: Probable GTP-binding protein EngB (200 aa).

Positions 25 to 199 (SGYEVAFAGR…ISVLDRWYEW (175 aa)) constitute an EngB-type G domain. Residues 33–40 (GRSNAGKS), 60–64 (GRTQL), 78–81 (DLPG), 145–148 (TKAD), and 178–180 (FSS) each bind GTP. 2 residues coordinate Mg(2+): Ser40 and Thr62.

This sequence belongs to the TRAFAC class TrmE-Era-EngA-EngB-Septin-like GTPase superfamily. EngB GTPase family. The cofactor is Mg(2+).

Necessary for normal cell division and for the maintenance of normal septation. This chain is Probable GTP-binding protein EngB, found in Legionella pneumophila (strain Paris).